The chain runs to 2045 residues: Non-reducing polyketide synthase pks27 (2045 aa).

The N-terminal acylcarrier protein transacylase domain (SAT) stretch occupies residues 10–247; the sequence is IVFGDLTCDS…LTIPIYAPYH (238 aa). One can recognise a Ketosynthase family 3 (KS3) domain in the interval 380–813; the sequence is HSKLAIIGYS…GGNSSVLIED (434 aa). Active-site for beta-ketoacyl synthase activity residues include cysteine 552, histidine 687, and histidine 731. Positions 913-1213 are malonyl-CoA:ACP transacylase (MAT) domain; sequence FAFTGQGSQY…VPTLQRNKDT (301 aa). The segment at 1289–1422 is N-terminal hotdog fold; sequence HKLVEEKKDG…ASITFPDAKA (134 aa). The region spanning 1289–1599 is the PKS/mFAS DH domain; it reads HKLVEEKKDG…AQGVPRRLMD (311 aa). Residue histidine 1321 is the Proton acceptor; for dehydratase activity of the active site. A C-terminal hotdog fold region spans residues 1442–1599; that stretch reads AARLNTDDRV…AQGVPRRLMD (158 aa). The active-site Proton donor; for dehydratase activity is the aspartate 1511. A disordered region spans residues 1612–1636; the sequence is APAGGTLNASQSAAANPAADPSAQA. The span at 1619 to 1636 shows a compositional bias: low complexity; sequence NASQSAAANPAADPSAQA. One can recognise a Carrier domain in the interval 1635–1712; that stretch reads QADSDNWQAA…ELEAFWKQGA (78 aa). The product template (PT) domain stretch occupies residues 1640–1709; it reads NWQAALKIIS…TIKELEAFWK (70 aa). Residue serine 1672 is modified to O-(pantetheine 4'-phosphoryl)serine. Positions 1735-1776 are disordered; it reads EAEVDQDKNSSDEDRSSLGTSSYEVISPNTTETTPEITKTSS. A compositionally biased stretch (basic and acidic residues) spans 1739-1750; it reads DQDKNSSDEDRS. The span at 1760-1776 shows a compositional bias: low complexity; the sequence is ISPNTTETTPEITKTSS. Residues 1798–2039 form a thioesterase region; it reads TLFLLPDGSG…AKRLSEMIEG (242 aa).

Pantetheine 4'-phosphate serves as cofactor.

The protein operates within secondary metabolite biosynthesis. Its function is as follows. Non-reducing polyketide synthase (NRPKS); part of the gene cluster 27 that mediates the biosynthesis of asparasone A, a sclerotium-specific anthraquinone pigment important for sclerotial survival. Catalyzes the formation of the aromatic polyketide from acetyl coenzyme A and seven malonyl coenzyme A molecules. Through its product template (PT) domain, catalyzes the cyclization of polyketide backbone via C6-C11 aldolcondensation. The chain is Non-reducing polyketide synthase pks27 from Aspergillus flavus (strain ATCC 200026 / FGSC A1120 / IAM 13836 / NRRL 3357 / JCM 12722 / SRRC 167).